Reading from the N-terminus, the 246-residue chain is Polyhedrin (246 aa).

The protein belongs to the polyhedrin family.

In terms of biological role, major component of the virus occlusion bodies, which are large proteinaceous structures (polyhedra), that protect the virus from the outside environment for extended periods until they are ingested by insect larvae. The polypeptide is Polyhedrin (PH) (Heliothis zea nuclear polyhedrosis virus (HzSNPV)).